A 268-amino-acid polypeptide reads, in one-letter code: DNA repair protein RecO (268 aa).

This sequence belongs to the RecO family.

Involved in DNA repair and RecF pathway recombination. This is DNA repair protein RecO from Mycobacterium leprae (strain Br4923).